A 780-amino-acid chain; its full sequence is Ino eighty subunit 1 (780 aa).

Disordered stretches follow at residues Met1–His25 and Ala563–Asn780. Residues Ala563 to Ala584 show a composition bias toward basic and acidic residues. Basic residues predominate over residues Ser600–Ala613. Over residues Arg614–Ser635 the composition is skewed to low complexity. 2 stretches are compositionally biased toward acidic residues: residues Leu676–Asp686 and Asp723–Asp751.

In terms of assembly, component of the chromatin-remodeling INO80 complex.

It localises to the nucleus. Probably involved in transcription regulation via its interaction with the INO80 complex, a chromatin-remodeling complex. The sequence is that of Ino eighty subunit 1 from Emericella nidulans (strain FGSC A4 / ATCC 38163 / CBS 112.46 / NRRL 194 / M139) (Aspergillus nidulans).